The sequence spans 440 residues: Chromosome partition protein MukF (440 aa).

The tract at residues L208–I236 is leucine-zipper.

The protein belongs to the MukF family. In terms of assembly, interacts, and probably forms a ternary complex, with MukE and MukB via its C-terminal region. The complex formation is stimulated by calcium or magnesium. It is required for an interaction between MukE and MukB.

The protein localises to the cytoplasm. Its subcellular location is the nucleoid. In terms of biological role, involved in chromosome condensation, segregation and cell cycle progression. May participate in facilitating chromosome segregation by condensation DNA from both sides of a centrally located replisome during cell division. Not required for mini-F plasmid partitioning. Probably acts via its interaction with MukB and MukE. Overexpression results in anucleate cells. It has a calcium binding activity. This chain is Chromosome partition protein MukF, found in Escherichia fergusonii (strain ATCC 35469 / DSM 13698 / CCUG 18766 / IAM 14443 / JCM 21226 / LMG 7866 / NBRC 102419 / NCTC 12128 / CDC 0568-73).